We begin with the raw amino-acid sequence, 285 residues long: Ribosomal RNA small subunit methyltransferase A (285 aa).

S-adenosyl-L-methionine contacts are provided by H27, L29, G54, E75, D100, and N120.

The protein belongs to the class I-like SAM-binding methyltransferase superfamily. rRNA adenine N(6)-methyltransferase family. RsmA subfamily.

It localises to the cytoplasm. It catalyses the reaction adenosine(1518)/adenosine(1519) in 16S rRNA + 4 S-adenosyl-L-methionine = N(6)-dimethyladenosine(1518)/N(6)-dimethyladenosine(1519) in 16S rRNA + 4 S-adenosyl-L-homocysteine + 4 H(+). In terms of biological role, specifically dimethylates two adjacent adenosines (A1518 and A1519) in the loop of a conserved hairpin near the 3'-end of 16S rRNA in the 30S particle. May play a critical role in biogenesis of 30S subunits. The chain is Ribosomal RNA small subunit methyltransferase A from Phenylobacterium zucineum (strain HLK1).